We begin with the raw amino-acid sequence, 701 residues long: Putative pentatricopeptide repeat-containing protein At3g25970 (701 aa).

PPR repeat units lie at residues 34–64 (DIYV…MPKR), 65–99 (DSVS…GSDV), 100–134 (DGYS…GYEC), 135–165 (NVYV…ISEP), 166–200 (NSVS…AAVT), 202–236 (DAGT…GLQH), 237–267 (EITI…LGGS), 269–303 (DLIS…WVET), 304–338 (DIYT…GLEQ), 339–371 (VTSA…LKSK), 372–406 (DLIS…EIKV), 407–441 (DDYA…GFVS), 442–472 (NEFV…ISSK), 474–508 (STVA…NVKL), 509–539 (DHVT…MEPV), and 545–575 (RMEH…MPLN). A type E motif region spans residues 580 to 655 (VLKTFLGVCR…VPGWSWIEIR (76 aa)). Positions 656 to 686 (NQVKAFNAEDRSNPLCQDIYMMIKDLTQEMQ) are type E(+) motif.

This sequence belongs to the PPR family. PCMP-E subfamily.

The protein is Putative pentatricopeptide repeat-containing protein At3g25970 (PCMP-E46) of Arabidopsis thaliana (Mouse-ear cress).